Consider the following 98-residue polypeptide: Ferredoxin-like protein (98 aa).

The 4Fe-4S ferredoxin-type domain maps to 57–87 (GQVEVTADGCMECGTCRVLCEANGDVEWSYP).

It to ferredoxins from P.putida and C.tartarivorum, ferredoxin I from A.vinelandii, ferredoxin II from D.desulfuricans.

Could be a 3Fe-4S cluster-containing protein. The sequence is that of Ferredoxin-like protein (fixX) from Rhizobium meliloti (strain 1021) (Ensifer meliloti).